A 492-amino-acid chain; its full sequence is 2-succinylbenzoate--CoA ligase (492 aa).

It belongs to the ATP-dependent AMP-binding enzyme family. MenE subfamily.

It carries out the reaction 2-succinylbenzoate + ATP + CoA = 2-succinylbenzoyl-CoA + AMP + diphosphate. It functions in the pathway quinol/quinone metabolism; 1,4-dihydroxy-2-naphthoate biosynthesis; 1,4-dihydroxy-2-naphthoate from chorismate: step 5/7. The protein operates within quinol/quinone metabolism; menaquinone biosynthesis. Its function is as follows. Converts 2-succinylbenzoate (OSB) to 2-succinylbenzoyl-CoA (OSB-CoA). The sequence is that of 2-succinylbenzoate--CoA ligase from Staphylococcus aureus (strain MRSA252).